The sequence spans 274 residues: Malonyl-[acyl-carrier protein] O-methyltransferase (274 aa).

It belongs to the methyltransferase superfamily.

It catalyses the reaction malonyl-[ACP] + S-adenosyl-L-methionine = malonyl-[ACP] methyl ester + S-adenosyl-L-homocysteine. It participates in cofactor biosynthesis; biotin biosynthesis. Converts the free carboxyl group of a malonyl-thioester to its methyl ester by transfer of a methyl group from S-adenosyl-L-methionine (SAM). It allows to synthesize pimeloyl-ACP via the fatty acid synthetic pathway. The polypeptide is Malonyl-[acyl-carrier protein] O-methyltransferase (Bacteroides helcogenes (strain ATCC 35417 / DSM 20613 / JCM 6297 / CCUG 15421 / P 36-108)).